The primary structure comprises 280 residues: Golgi to ER traffic protein 2 (280 aa).

Topologically, residues 1–149 (MPSDREKQRI…IAYNLYQQRK (149 aa)) are cytoplasmic. A disordered region spans residues 15–59 (RQAKMAKGGASDRLNKILSQGSSVKTSAVSVLDQPQPADHDPEGM). A compositionally biased stretch (polar residues) spans 31 to 43 (ILSQGSSVKTSAV). Residues 150–170 (VRHRFLVVRMVSILANFVYHF) form a helical membrane-spanning segment. At 171–197 (LTISDFSFSPSANPFIRSIPPTSSVSS) the chain is on the lumenal side. A helical membrane pass occupies residues 198-217 (FFQIFVAIEAVLVAAYIAAS). The Cytoplasmic portion of the chain corresponds to 218–257 (RNVPSNNNGLLVKGISMAAMFVPKLQRFQPLIMKIIGCWD). Residues 258–278 (TVTFVLNDLGLVVLLFGLISF) form a helical membrane-spanning segment. At 279–280 (RR) the chain is on the lumenal side.

The protein belongs to the GET2 family. In terms of assembly, component of the Golgi to ER traffic (GET) complex, which is composed of GET1, GET2 and GET3. Within the complex, GET1 and GET2 form a heterotetramer which is stabilized by phosphatidylinositol binding and which binds to the GET3 homodimer.

The protein resides in the endoplasmic reticulum membrane. It localises to the golgi apparatus membrane. Required for the post-translational delivery of tail-anchored (TA) proteins to the endoplasmic reticulum. Together with GET1, acts as a membrane receptor for soluble GET3, which recognizes and selectively binds the transmembrane domain of TA proteins in the cytosol. The GET complex cooperates with the HDEL receptor ERD2 to mediate the ATP-dependent retrieval of resident ER proteins that contain a C-terminal H-D-E-L retention signal from the Golgi to the ER. In Meyerozyma guilliermondii (strain ATCC 6260 / CBS 566 / DSM 6381 / JCM 1539 / NBRC 10279 / NRRL Y-324) (Yeast), this protein is Golgi to ER traffic protein 2.